Consider the following 205-residue polypeptide: Thiamine-phosphate synthase (205 aa).

Residues 37–41 (QVREK) and Asn-69 each bind 4-amino-2-methyl-5-(diphosphooxymethyl)pyrimidine. Mg(2+)-binding residues include Asp-70 and Asp-89. 4-amino-2-methyl-5-(diphosphooxymethyl)pyrimidine is bound at residue Ser-108. Position 134–136 (134–136 (TGS)) interacts with 2-[(2R,5Z)-2-carboxy-4-methylthiazol-5(2H)-ylidene]ethyl phosphate. Lys-137 is a binding site for 4-amino-2-methyl-5-(diphosphooxymethyl)pyrimidine. Residues Gly-165 and 185-186 (IS) contribute to the 2-[(2R,5Z)-2-carboxy-4-methylthiazol-5(2H)-ylidene]ethyl phosphate site.

This sequence belongs to the thiamine-phosphate synthase family. Mg(2+) is required as a cofactor.

The catalysed reaction is 2-[(2R,5Z)-2-carboxy-4-methylthiazol-5(2H)-ylidene]ethyl phosphate + 4-amino-2-methyl-5-(diphosphooxymethyl)pyrimidine + 2 H(+) = thiamine phosphate + CO2 + diphosphate. It catalyses the reaction 2-(2-carboxy-4-methylthiazol-5-yl)ethyl phosphate + 4-amino-2-methyl-5-(diphosphooxymethyl)pyrimidine + 2 H(+) = thiamine phosphate + CO2 + diphosphate. The enzyme catalyses 4-methyl-5-(2-phosphooxyethyl)-thiazole + 4-amino-2-methyl-5-(diphosphooxymethyl)pyrimidine + H(+) = thiamine phosphate + diphosphate. The protein operates within cofactor biosynthesis; thiamine diphosphate biosynthesis; thiamine phosphate from 4-amino-2-methyl-5-diphosphomethylpyrimidine and 4-methyl-5-(2-phosphoethyl)-thiazole: step 1/1. Condenses 4-methyl-5-(beta-hydroxyethyl)thiazole monophosphate (THZ-P) and 2-methyl-4-amino-5-hydroxymethyl pyrimidine pyrophosphate (HMP-PP) to form thiamine monophosphate (TMP). The sequence is that of Thiamine-phosphate synthase from Clostridium botulinum (strain 657 / Type Ba4).